The sequence spans 284 residues: ATP phosphoribosyltransferase (284 aa).

It belongs to the ATP phosphoribosyltransferase family. Long subfamily. Equilibrium between an active dimeric form, an inactive hexameric form and higher aggregates. Interconversion between the various forms is largely reversible and is influenced by the natural substrates and inhibitors of the enzyme. The cofactor is Mg(2+).

It is found in the cytoplasm. The catalysed reaction is 1-(5-phospho-beta-D-ribosyl)-ATP + diphosphate = 5-phospho-alpha-D-ribose 1-diphosphate + ATP. The protein operates within amino-acid biosynthesis; L-histidine biosynthesis; L-histidine from 5-phospho-alpha-D-ribose 1-diphosphate: step 1/9. Feedback inhibited by histidine. In terms of biological role, catalyzes the condensation of ATP and 5-phosphoribose 1-diphosphate to form N'-(5'-phosphoribosyl)-ATP (PR-ATP). Has a crucial role in the pathway because the rate of histidine biosynthesis seems to be controlled primarily by regulation of HisG enzymatic activity. This chain is ATP phosphoribosyltransferase, found in Mycobacterium avium (strain 104).